We begin with the raw amino-acid sequence, 344 residues long: Uroporphyrinogen decarboxylase (344 aa).

Residues Arg25 to Arg29, Asp75, Tyr152, Ser207, and His323 each bind substrate.

This sequence belongs to the uroporphyrinogen decarboxylase family. As to quaternary structure, homodimer.

It is found in the cytoplasm. The enzyme catalyses uroporphyrinogen III + 4 H(+) = coproporphyrinogen III + 4 CO2. It participates in porphyrin-containing compound metabolism; protoporphyrin-IX biosynthesis; coproporphyrinogen-III from 5-aminolevulinate: step 4/4. Catalyzes the decarboxylation of four acetate groups of uroporphyrinogen-III to yield coproporphyrinogen-III. This is Uroporphyrinogen decarboxylase from Ruegeria pomeroyi (strain ATCC 700808 / DSM 15171 / DSS-3) (Silicibacter pomeroyi).